Here is a 253-residue protein sequence, read N- to C-terminus: Probable transcriptional regulatory protein RPR_05505 (253 aa).

Belongs to the TACO1 family.

It is found in the cytoplasm. The sequence is that of Probable transcriptional regulatory protein RPR_05505 from Rickettsia peacockii (strain Rustic).